Consider the following 428-residue polypeptide: Monocarboxylate transporter 13 (428 aa).

Over 1–10 (MVHRTEPPDG) the chain is Cytoplasmic. 12 helical membrane-spanning segments follow: residues 11-31 (GWGW…FGVL), 52-72 (VSWI…IGSA), 81-101 (PVVM…SFAT), 106-126 (LYLS…TPTL), 139-159 (LAMG…APLF), 172-192 (LLLV…LRPL), 221-241 (VALT…VAHL), 244-264 (LGWD…SDLV), 283-303 (LLML…VAQA), 309-329 (VLAV…FSVI), 338-358 (IYCG…LGAP), and 374-394 (FVVA…LPHF). Topologically, residues 395 to 428 (FSCISLSTSRPQDLVIEAPDTKIPLPKEEGLGEN) are cytoplasmic.

This sequence belongs to the major facilitator superfamily. Monocarboxylate porter (TC 2.A.1.13) family.

It localises to the golgi apparatus membrane. Its subcellular location is the cell membrane. Functionally, proton-linked monocarboxylate transporter. May catalyze the transport of monocarboxylates across the plasma membrane. This Rattus norvegicus (Rat) protein is Monocarboxylate transporter 13 (Slc16a13).